Reading from the N-terminus, the 194-residue chain is UPF0215 protein DR_A0167 (194 aa).

The protein belongs to the UPF0215 family.

This chain is UPF0215 protein DR_A0167, found in Deinococcus radiodurans (strain ATCC 13939 / DSM 20539 / JCM 16871 / CCUG 27074 / LMG 4051 / NBRC 15346 / NCIMB 9279 / VKM B-1422 / R1).